Here is a 267-residue protein sequence, read N- to C-terminus: Trehalose 2-sulfotransferase (267 aa).

Alpha,alpha-trehalose contacts are provided by residues Gln-14, 33-39, Pro-48, and Trp-53; that span reads EPQEFFQ. Glu-36 serves as the catalytic Proton acceptor.

This sequence belongs to the Stf0 sulfotransferase family. Homodimer.

The enzyme catalyses alpha,alpha-trehalose + 3'-phosphoadenylyl sulfate = 2-O-sulfo-alpha,alpha-trehalose + adenosine 3',5'-bisphosphate + H(+). It participates in glycolipid metabolism. Catalyzes the sulfuryl group transfer from 3'-phosphoadenosine-5'-phosphosulfate (PAPS) to trehalose, leading to trehalose-2-sulfate (T2S). The sulfation of trehalose is the first step in the biosynthesis of sulfolipid-1 (SL-1), a major cell wall glycolipid and the most abundant sulfated metabolite found in Mycobacterium tuberculosis, that is a potential virulence factor thought to mediate host-pathogen interactions. This is Trehalose 2-sulfotransferase from Mycobacterium tuberculosis (strain ATCC 35801 / TMC 107 / Erdman).